Reading from the N-terminus, the 156-residue chain is NADH-ubiquinone oxidoreductase chain 6 (156 aa).

A run of 5 helical transmembrane segments spans residues 1-21 (MILT…YLAS), 24-44 (IVLG…FASF), 49-69 (FAFL…AYFL), 77-97 (ISNF…SALT), and 121-141 (STAP…VIVV).

This sequence belongs to the complex I subunit 6 family.

It is found in the mitochondrion membrane. The enzyme catalyses a ubiquinone + NADH + 5 H(+)(in) = a ubiquinol + NAD(+) + 4 H(+)(out). Functionally, core subunit of the mitochondrial membrane respiratory chain NADH dehydrogenase (Complex I) that is believed to belong to the minimal assembly required for catalysis. Complex I functions in the transfer of electrons from NADH to the respiratory chain. The immediate electron acceptor for the enzyme is believed to be ubiquinone. The chain is NADH-ubiquinone oxidoreductase chain 6 (ND6) from Lumbricus terrestris (Common earthworm).